Here is a 182-residue protein sequence, read N- to C-terminus: Adenine phosphoribosyltransferase (182 aa).

The protein belongs to the purine/pyrimidine phosphoribosyltransferase family. Homodimer.

It is found in the cytoplasm. The catalysed reaction is AMP + diphosphate = 5-phospho-alpha-D-ribose 1-diphosphate + adenine. Its pathway is purine metabolism; AMP biosynthesis via salvage pathway; AMP from adenine: step 1/1. Catalyzes a salvage reaction resulting in the formation of AMP, that is energically less costly than de novo synthesis. The polypeptide is Adenine phosphoribosyltransferase (Bordetella avium (strain 197N)).